The sequence spans 484 residues: Protein nucleotidyltransferase YdiU (484 aa).

Residues glycine 92, glycine 94, arginine 95, lysine 115, aspartate 127, glycine 128, arginine 178, and arginine 185 each contribute to the ATP site. The Proton acceptor role is filled by aspartate 258. Mg(2+)-binding residues include asparagine 259 and aspartate 268. Aspartate 268 lines the ATP pocket.

It belongs to the SELO family. Mg(2+) serves as cofactor. It depends on Mn(2+) as a cofactor.

The catalysed reaction is L-seryl-[protein] + ATP = 3-O-(5'-adenylyl)-L-seryl-[protein] + diphosphate. The enzyme catalyses L-threonyl-[protein] + ATP = 3-O-(5'-adenylyl)-L-threonyl-[protein] + diphosphate. It catalyses the reaction L-tyrosyl-[protein] + ATP = O-(5'-adenylyl)-L-tyrosyl-[protein] + diphosphate. It carries out the reaction L-histidyl-[protein] + UTP = N(tele)-(5'-uridylyl)-L-histidyl-[protein] + diphosphate. The catalysed reaction is L-seryl-[protein] + UTP = O-(5'-uridylyl)-L-seryl-[protein] + diphosphate. The enzyme catalyses L-tyrosyl-[protein] + UTP = O-(5'-uridylyl)-L-tyrosyl-[protein] + diphosphate. Its function is as follows. Nucleotidyltransferase involved in the post-translational modification of proteins. It can catalyze the addition of adenosine monophosphate (AMP) or uridine monophosphate (UMP) to a protein, resulting in modifications known as AMPylation and UMPylation. The sequence is that of Protein nucleotidyltransferase YdiU from Mycolicibacterium smegmatis (strain ATCC 700084 / mc(2)155) (Mycobacterium smegmatis).